The chain runs to 240 residues: Expansin-A20 (240 aa).

The first 21 residues, 1–21 (MGNILLQLLAVVALCIAPARS), serve as a signal peptide directing secretion. Residues 41–145 (GGACGYGNLY…QQVKCWRYGG (105 aa)) form the Expansin-like EG45 domain. N-linked (GlcNAc...) asparagine glycosylation is found at asparagine 107 and asparagine 207. The region spanning 155-234 (YFELVLVTNM…GWSFGQTFST (80 aa)) is the Expansin-like CBD domain.

The protein belongs to the expansin family. Expansin A subfamily.

The protein resides in the secreted. It is found in the cell wall. The protein localises to the membrane. Functionally, may cause loosening and extension of plant cell walls by disrupting non-covalent bonding between cellulose microfibrils and matrix glucans. No enzymatic activity has been found. May be required for rapid internodal elongation in deepwater rice during submergence. This is Expansin-A20 (EXPA20) from Oryza sativa subsp. japonica (Rice).